Consider the following 157-residue polypeptide: Dihydrofolate reductase type 5 (157 aa).

One can recognise a DHFR domain in the interval 2–156 (KVSLMAAKAK…INYCYQIWQK (155 aa)).

This sequence belongs to the dihydrofolate reductase family. Homodimer.

It carries out the reaction (6S)-5,6,7,8-tetrahydrofolate + NADP(+) = 7,8-dihydrofolate + NADPH + H(+). The protein operates within cofactor biosynthesis; tetrahydrofolate biosynthesis; 5,6,7,8-tetrahydrofolate from 7,8-dihydrofolate: step 1/1. Its function is as follows. Key enzyme in folate metabolism. Catalyzes an essential reaction for de novo glycine and purine synthesis, and for DNA precursor synthesis. In Escherichia coli, this protein is Dihydrofolate reductase type 5 (dhfrV).